Here is a 1179-residue protein sequence, read N- to C-terminus: Tubulin glycylase 3B (1179 aa).

The span at 177–199 shows a compositional bias: polar residues; it reads NKGQTNNSNRENGGNFHSEQSPK. Disordered regions lie at residues 177-208, 250-278, 592-625, and 853-890; these read NKGQTNNSNRENGGNFHSEQSPKSAAGSVVSG, QQPQPLSQQHSNQSSQSSNPQSQSPLPLS, KVLSNTKSKDEEESSDDDETPVKSKSNNQNAVQQ, and QKQHMNKRKNSHRISVNHNHNDPIEEESAQSSTSLKQD. A compositionally biased stretch (basic and acidic residues) spans 592-601; the sequence is KVLSNTKSKD. Composition is skewed to polar residues over residues 614 to 625 and 881 to 890; these read KSKSNNQNAVQQ and AQSSTSLKQD. Positions 790 to 1152 constitute a TTL domain; that stretch reads FIDFYETVDF…SMAKKGTKKN (363 aa). ATP-binding positions include 965 to 968, K978, and D980; that span reads QKYI.

It localises to the cell projection. Its subcellular location is the cilium. The protein resides in the cytoplasm. It is found in the cytoskeleton. The protein localises to the cilium axoneme. Its function is as follows. Polyglycylase which modifies tubulin, generating side chains of glycine on the gamma-carboxyl groups of specific glutamate residues within the C-terminal tail of tubulin. Polyglycylates tubulin, with a preference for alpha-tubulin toward beta-tubulin. The polypeptide is Tubulin glycylase 3B (TTLL3B) (Tetrahymena thermophila (strain SB210)).